The primary structure comprises 207 residues: Segregation and condensation protein B (207 aa).

The protein belongs to the ScpB family. Homodimer. Homodimerization may be required to stabilize the binding of ScpA to the Smc head domains. Component of a cohesin-like complex composed of ScpA, ScpB and the Smc homodimer, in which ScpA and ScpB bind to the head domain of Smc. The presence of the three proteins is required for the association of the complex with DNA.

The protein resides in the cytoplasm. Participates in chromosomal partition during cell division. May act via the formation of a condensin-like complex containing Smc and ScpA that pull DNA away from mid-cell into both cell halves. The polypeptide is Segregation and condensation protein B (Mycoplasma genitalium (strain ATCC 33530 / DSM 19775 / NCTC 10195 / G37) (Mycoplasmoides genitalium)).